The following is a 315-amino-acid chain: Carbamate kinase (315 aa).

Belongs to the carbamate kinase family. As to quaternary structure, homodimer.

It is found in the cytoplasm. It catalyses the reaction hydrogencarbonate + NH4(+) + ATP = carbamoyl phosphate + ADP + H2O + H(+). The sequence is that of Carbamate kinase (cpkA) from Thermococcus kodakarensis (strain ATCC BAA-918 / JCM 12380 / KOD1) (Pyrococcus kodakaraensis (strain KOD1)).